Here is a 461-residue protein sequence, read N- to C-terminus: Argininosuccinate lyase (461 aa).

Belongs to the lyase 1 family. Argininosuccinate lyase subfamily.

The protein resides in the cytoplasm. It carries out the reaction 2-(N(omega)-L-arginino)succinate = fumarate + L-arginine. It participates in amino-acid biosynthesis; L-arginine biosynthesis; L-arginine from L-ornithine and carbamoyl phosphate: step 3/3. Its activity is regulated as follows. Strongly inhibited by L-arginine. Inhibitory effects are lowered at pH 7.0 compared to those at pH 8.0. At 45 degrees Celsius and pH 8.0, activity decreases to 94%, 74% and 37% in the presence of 0.6 mM, 2.8 mM and 10 mM arginine, respectively. Activity also decreases to 86% in the presence of 10 mM sodium succinate or sodium citrate. Activity does not decrease in the presence of 1 mM or 10 mM L-lysine, which has a similar structure to arginine. In terms of biological role, catalyzes the last step of arginine biosynthesis, the conversion of argininosuccinate into L-arginine and fumarate. This Synechocystis sp. (strain ATCC 27184 / PCC 6803 / Kazusa) protein is Argininosuccinate lyase.